The following is a 466-amino-acid chain: ATP synthase subunit beta (466 aa).

155–162 (GGAGVGKT) lines the ATP pocket.

It belongs to the ATPase alpha/beta chains family. F-type ATPases have 2 components, CF(1) - the catalytic core - and CF(0) - the membrane proton channel. CF(1) has five subunits: alpha(3), beta(3), gamma(1), delta(1), epsilon(1). CF(0) has three main subunits: a(1), b(2) and c(9-12). The alpha and beta chains form an alternating ring which encloses part of the gamma chain. CF(1) is attached to CF(0) by a central stalk formed by the gamma and epsilon chains, while a peripheral stalk is formed by the delta and b chains.

It is found in the cell inner membrane. The catalysed reaction is ATP + H2O + 4 H(+)(in) = ADP + phosphate + 5 H(+)(out). Produces ATP from ADP in the presence of a proton gradient across the membrane. The catalytic sites are hosted primarily by the beta subunits. The sequence is that of ATP synthase subunit beta from Bordetella avium (strain 197N).